A 143-amino-acid chain; its full sequence is Large ribosomal subunit protein uL13 (143 aa).

It belongs to the universal ribosomal protein uL13 family. Part of the 50S ribosomal subunit.

Its function is as follows. This protein is one of the early assembly proteins of the 50S ribosomal subunit, although it is not seen to bind rRNA by itself. It is important during the early stages of 50S assembly. This chain is Large ribosomal subunit protein uL13, found in Solibacter usitatus (strain Ellin6076).